The sequence spans 231 residues: Ion-translocating oxidoreductase complex subunit E (231 aa).

The next 6 helical transmembrane spans lie at 18–38 (ALVQ…ATNA), 39–59 (LGLG…ISTL), 63–83 (TPAE…VSAV), 86–106 (LINA…PLIV), 125–145 (ALSA…MCVL), and 182–202 (PFLL…MLAG).

Belongs to the NqrDE/RnfAE family. As to quaternary structure, the complex is composed of six subunits: RsxA, RsxB, RsxC, RsxD, RsxE and RsxG.

The protein resides in the cell inner membrane. Functionally, part of a membrane-bound complex that couples electron transfer with translocation of ions across the membrane. Required to maintain the reduced state of SoxR. The polypeptide is Ion-translocating oxidoreductase complex subunit E (Escherichia coli (strain SMS-3-5 / SECEC)).